The sequence spans 264 residues: 3-methyl-2-oxobutanoate hydroxymethyltransferase (264 aa).

2 residues coordinate Mg(2+): Asp45 and Asp84. Residues 45–46 (DS), Asp84, and Lys112 contribute to the 3-methyl-2-oxobutanoate site. Glu114 is a binding site for Mg(2+). Glu181 serves as the catalytic Proton acceptor.

It belongs to the PanB family. As to quaternary structure, homodecamer; pentamer of dimers. It depends on Mg(2+) as a cofactor.

The protein localises to the cytoplasm. It catalyses the reaction 3-methyl-2-oxobutanoate + (6R)-5,10-methylene-5,6,7,8-tetrahydrofolate + H2O = 2-dehydropantoate + (6S)-5,6,7,8-tetrahydrofolate. Its pathway is cofactor biosynthesis; (R)-pantothenate biosynthesis; (R)-pantoate from 3-methyl-2-oxobutanoate: step 1/2. Functionally, catalyzes the reversible reaction in which hydroxymethyl group from 5,10-methylenetetrahydrofolate is transferred onto alpha-ketoisovalerate to form ketopantoate. The sequence is that of 3-methyl-2-oxobutanoate hydroxymethyltransferase from Tolumonas auensis (strain DSM 9187 / NBRC 110442 / TA 4).